Here is a 90-residue protein sequence, read N- to C-terminus: Putative ATPase inhibitor, mitochondrial (90 aa).

A coiled-coil region spans residues 42–89 (ESREKAKEDFFVHQHEIEQLRKLKESLKLHREELDELESRVDKKMKSN).

Belongs to the ATPase inhibitor family.

The protein localises to the mitochondrion. In terms of biological role, forms a one-to-one complex with ATPase to inhibit the enzyme activity completely. The sequence is that of Putative ATPase inhibitor, mitochondrial (inh1) from Schizosaccharomyces pombe (strain 972 / ATCC 24843) (Fission yeast).